Here is a 478-residue protein sequence, read N- to C-terminus: Lactate utilization protein B (478 aa).

4Fe-4S ferredoxin-type domains follow at residues 303–333 (GTEF…GHAY) and 352–381 (YDDH…LHEQ). Positions 312, 315, 318, 322, 365, 368, and 372 each coordinate [4Fe-4S] cluster.

It belongs to the LutB/YkgF family.

Is involved in L-lactate degradation and allows cells to grow with lactate as the sole carbon source. Has probably a role as an electron transporter during oxidation of L-lactate. The polypeptide is Lactate utilization protein B (Oceanobacillus iheyensis (strain DSM 14371 / CIP 107618 / JCM 11309 / KCTC 3954 / HTE831)).